Reading from the N-terminus, the 504-residue chain is DnaJ homolog subfamily C member 3 (504 aa).

Positions 1-31 (MVAPGSVTSRLGSVFPFLLVLVDLQYEGAEC) are cleaved as a signal peptide. TPR repeat units follow at residues 37 to 70 (VEKH…DPDN), 72 to 104 (IAYY…KMDF), 105 to 138 (TAAR…NPSE), 154 to 187 (MQRL…CVWD), 189 to 221 (ELRE…KNDN), 222 to 255 (TEAF…DQDH), 268 to 301 (LNKL…EPGV), 306 to 339 (IRSK…EPDN), and 340 to 373 (VNAL…NEND). A disulfide bridge links Cys248 with Cys258. Ser274 bears the Phosphoserine mark. A disulfide bridge links Cys313 with Cys329. Residues 375 to 393 (QIREGLEKAQRLLKQSQRR) form a flexible linker region. Positions 394–462 (DYYKILGVKR…EMRKKFDDGE (69 aa)) constitute a J domain. Residues 451-481 (DPEMRKKFDDGEDPLDAESQQGGGGNPFHRS) form a disordered region.

In terms of assembly, interacts with EIF2AK4/GCN2; this interaction occurs under endoplasmic reticulum (ER) stress, hypothermic and amino acid starving stress conditions and inhibits EIF2AK4/GCN2 kinase activity. Interacts with EIF2AK3. Interacts with EIF2AK2. Forms a trimeric complex with DNAJB1 and HSPA8. Interacts with THAP12.

The protein resides in the endoplasmic reticulum. In terms of biological role, involved in the unfolded protein response (UPR) during endoplasmic reticulum (ER) stress. Acts as a negative regulator of the EIF2AK4/GCN2 kinase activity by preventing the phosphorylation of eIF-2-alpha at 'Ser-52' and hence attenuating general protein synthesis under ER stress, hypothermic and amino acid starving stress conditions. Co-chaperone of HSPA8/HSC70, it stimulates its ATPase activity. May inhibit both the autophosphorylation of EIF2AK2/PKR and the ability of EIF2AK2 to catalyze phosphorylation of the EIF2A. May inhibit EIF2AK3/PERK activity. The protein is DnaJ homolog subfamily C member 3 (DNAJC3) of Bos taurus (Bovine).